The following is a 317-amino-acid chain: MIEVIISAMRLVAQDIISLEFVRADGGLLPPVEAGAHVDVHLPGGLIRQYSLWNQPGAQSHYCIGVLKDPASRGGSKAVHENLRVGMRVQISEPRNLFPLEEGVERSLLFAGGIGITPILCMAQELAAREQDFELHYCARSTDRAAFVEWLKVCDFADHVRFHFDNGPDQQKLNAAALLAAEAEGTHLYVCGPGGFMGHVLDTAKEQGWADNRLHREYFAAAPNVSADDGSFEVRIHSTGQVLQVPADQTVSQVLDAAGIIVPVSCEQGICGTCITRVVDGEPDHRDFFLTDAEKAKNDQFTPCCSRAKSACLVLDL.

Residues 1-101 (MIEVIISAMR…SEPRNLFPLE (101 aa)) form the FAD-binding FR-type domain. 105-220 (ERSLLFAGGI…DNRLHREYFA (116 aa)) is an NAD(+) binding site. The 86-residue stretch at 232-317 (FEVRIHSTGQ…AKSACLVLDL (86 aa)) folds into the 2Fe-2S ferredoxin-type domain. Positions 266, 271, 274, and 304 each coordinate [2Fe-2S] cluster.

It belongs to the PDR/VanB family. This demethylase system consists of two proteins: an oxygenase and an oxygenase reductase. FMN is required as a cofactor.

The protein operates within xenobiotic degradation; vanillyl-alcohol degradation. In Pseudomonas sp. (strain HR199 / DSM 7063), this protein is Vanillate O-demethylase oxidoreductase (vanB).